A 140-amino-acid chain; its full sequence is Actin-depolymerizing factor 8 (140 aa).

A Phosphoserine modification is found at serine 6. Positions glycine 7–asparagine 139 constitute an ADF-H domain.

The protein belongs to the actin-binding proteins ADF family. As to expression, expressed in the root trichoblast cells and developed root hairs.

The protein localises to the cytoplasm. It is found in the cytoskeleton. Its function is as follows. Actin-depolymerizing protein. Severs actin filaments (F-actin) and binds to actin monomers. The sequence is that of Actin-depolymerizing factor 8 (ADF8) from Arabidopsis thaliana (Mouse-ear cress).